Here is a 552-residue protein sequence, read N- to C-terminus: 5'-AMP-activated protein kinase catalytic subunit alpha-2 (552 aa).

The region spanning 16–268 (YVLGDTLGVG…IKDIREHEWF (253 aa)) is the Protein kinase domain. ATP contacts are provided by residues 22–30 (LGVGTFGKV) and Lys-45. The Proton acceptor role is filled by Asp-139. Thr-172 is subject to Phosphothreonine; by LKB1 and CaMKK2. The residue at position 258 (Thr-258) is a Phosphothreonine. The segment at 291–376 (EAVKEVCEKF…PERMPPLIAD (86 aa)) is AIS. The residue at position 377 (Ser-377) is a Phosphoserine. Residues 477–521 (VEQRSGSSTPQRSCSAAGLHRPRSSFDSTTAESHSLSGSLTGSLT) form a disordered region. The span at 480 to 490 (RSGSSTPQRSC) shows a compositional bias: polar residues. Residue Ser-491 is modified to Phosphoserine. Over residues 501-510 (SFDSTTAESH) the composition is skewed to polar residues. Over residues 511–521 (SLSGSLTGSLT) the composition is skewed to low complexity.

The protein belongs to the protein kinase superfamily. CAMK Ser/Thr protein kinase family. SNF1 subfamily. In terms of assembly, AMPK is a heterotrimer of an alpha catalytic subunit (PRKAA1 or PRKAA2), a beta (PRKAB1 or PRKAB2) and a gamma non-catalytic subunits (PRKAG1, PRKAG2 or PRKAG3). Interacts with FNIP1 and FNIP2. Associates with internalized insulin receptor/INSR complexes on Golgi/endosomal membranes; PRKAA2/AMPK2 together with ATIC and HACD3/PTPLAD1 is proposed to be part of a signaling network regulating INSR autophosphorylation and endocytosis. Interacts with ARF6. The phosphorylated form at Thr-172 mediated by CamKK2 interacts with ACSS2. The cofactor is Mg(2+). Post-translationally, ubiquitinated. Phosphorylated at Thr-172 by STK11/LKB1 in complex with STE20-related adapter-alpha (STRADA) pseudo kinase and CAB39. Also phosphorylated at Thr-172 by CAMKK2; triggered by a rise in intracellular calcium ions, without detectable changes in the AMP/ATP ratio. CAMKK1 can also phosphorylate Thr-172, but at much lower level. Dephosphorylated by protein phosphatase 2A and 2C (PP2A and PP2C). Phosphorylated by ULK1; leading to negatively regulate AMPK activity and suggesting the existence of a regulatory feedback loop between ULK1 and AMPK. Dephosphorylated by PPM1A and PPM1B at Thr-172 (mediated by STK11/LKB1).

Its subcellular location is the cytoplasm. The protein localises to the nucleus. The enzyme catalyses L-seryl-[protein] + ATP = O-phospho-L-seryl-[protein] + ADP + H(+). It carries out the reaction L-threonyl-[protein] + ATP = O-phospho-L-threonyl-[protein] + ADP + H(+). The catalysed reaction is L-seryl-[acetyl-CoA carboxylase] + ATP = O-phospho-L-seryl-[acetyl-CoA carboxylase] + ADP + H(+). It catalyses the reaction L-seryl-[3-hydroxy-3-methylglutaryl-coenzyme A reductase] + ATP = O-phospho-L-seryl-[3-hydroxy-3-methylglutaryl-coenzyme A reductase] + ADP + H(+). With respect to regulation, activated by phosphorylation on Thr-172. Binding of AMP to non-catalytic gamma subunit (PRKAG1, PRKAG2 or PRKAG3) results in allosteric activation, inducing phosphorylation on Thr-172. AMP-binding to gamma subunit also sustains activity by preventing dephosphorylation of Thr-172. ADP also stimulates Thr-172 phosphorylation, without stimulating already phosphorylated AMPK. ATP promotes dephosphorylation of Thr-172, rendering the enzyme inactive. Under physiological conditions AMPK mainly exists in its inactive form in complex with ATP, which is much more abundant than AMP. AMPK is activated by antihyperglycemic drug metformin, a drug prescribed to patients with type 2 diabetes: in vivo, metformin seems to mainly inhibit liver gluconeogenesis. However, metformin can be used to activate AMPK in muscle and other cells in culture or ex vivo. Selectively inhibited by compound C (6-[4-(2-Piperidin-1-yl-ethoxy)-phenyl)]-3-pyridin-4-yl-pyyrazolo[1,5-a] pyrimidine. Activated by resveratrol, a natural polyphenol present in red wine, and S17834, a synthetic polyphenol. Salicylate/aspirin directly activates kinase activity, primarily by inhibiting Thr-172 dephosphorylation. In terms of biological role, catalytic subunit of AMP-activated protein kinase (AMPK), an energy sensor protein kinase that plays a key role in regulating cellular energy metabolism. In response to reduction of intracellular ATP levels, AMPK activates energy-producing pathways and inhibits energy-consuming processes: inhibits protein, carbohydrate and lipid biosynthesis, as well as cell growth and proliferation. AMPK acts via direct phosphorylation of metabolic enzymes, and by longer-term effects via phosphorylation of transcription regulators. Regulates lipid synthesis by phosphorylating and inactivating lipid metabolic enzymes such as ACACA, ACACB, GYS1, HMGCR and LIPE; regulates fatty acid and cholesterol synthesis by phosphorylating acetyl-CoA carboxylase (ACACA and ACACB) and hormone-sensitive lipase (LIPE) enzymes, respectively. Promotes lipolysis of lipid droplets by mediating phosphorylation of isoform 1 of CHKA (CHKalpha2). Regulates insulin-signaling and glycolysis by phosphorylating IRS1, PFKFB2 and PFKFB3. Involved in insulin receptor/INSR internalization. AMPK stimulates glucose uptake in muscle by increasing the translocation of the glucose transporter SLC2A4/GLUT4 to the plasma membrane, possibly by mediating phosphorylation of TBC1D4/AS160. Regulates transcription and chromatin structure by phosphorylating transcription regulators involved in energy metabolism such as CRTC2/TORC2, FOXO3, histone H2B, HDAC5, MEF2C, MLXIPL/ChREBP, EP300, HNF4A, p53/TP53, SREBF1, SREBF2 and PPARGC1A. Acts as a key regulator of glucose homeostasis in liver by phosphorylating CRTC2/TORC2, leading to CRTC2/TORC2 sequestration in the cytoplasm. In response to stress, phosphorylates 'Ser-36' of histone H2B (H2BS36ph), leading to promote transcription. Acts as a key regulator of cell growth and proliferation by phosphorylating FNIP1, TSC2, RPTOR, WDR24 and ATG1/ULK1: in response to nutrient limitation, negatively regulates the mTORC1 complex by phosphorylating RPTOR component of the mTORC1 complex and by phosphorylating and activating TSC2. Also phosphorylates and inhibits GATOR2 subunit WDR24 in response to nutrient limitation, leading to suppress glucose-mediated mTORC1 activation. In response to energetic stress, phosphorylates FNIP1, inactivating the non-canonical mTORC1 signaling, thereby promoting nuclear translocation of TFEB and TFE3, and inducing transcription of lysosomal or autophagy genes. In response to nutrient limitation, promotes autophagy by phosphorylating and activating ATG1/ULK1. In that process, it also activates WDR45/WIPI4. Phosphorylates CASP6, thereby preventing its autoprocessing and subsequent activation. AMPK also acts as a regulator of circadian rhythm by mediating phosphorylation of CRY1, leading to destabilize it. May regulate the Wnt signaling pathway by phosphorylating CTNNB1, leading to stabilize it. Also acts as a regulator of cellular polarity by remodeling the actin cytoskeleton; probably by indirectly activating myosin. Also phosphorylates CFTR, EEF2K, KLC1, NOS3 and SLC12A1. Plays an important role in the differential regulation of pro-autophagy (composed of PIK3C3, BECN1, PIK3R4 and UVRAG or ATG14) and non-autophagy (composed of PIK3C3, BECN1 and PIK3R4) complexes, in response to glucose starvation. Can inhibit the non-autophagy complex by phosphorylating PIK3C3 and can activate the pro-autophagy complex by phosphorylating BECN1. Upon glucose starvation, promotes ARF6 activation in a kinase-independent manner leading to cell migration. Upon glucose deprivation mediates the phosphorylation of ACSS2 at 'Ser-659', which exposes the nuclear localization signal of ACSS2, required for its interaction with KPNA1 and nuclear translocation. Upon stress, regulates mitochondrial fragmentation through phosphorylation of MTFR1L. This is 5'-AMP-activated protein kinase catalytic subunit alpha-2 from Homo sapiens (Human).